A 459-amino-acid polypeptide reads, in one-letter code: Probable ECA polymerase (459 aa).

A run of 11 helical transmembrane segments spans residues 3–23, 37–57, 65–85, 119–139, 154–174, 181–201, 206–226, 227–247, 340–360, 377–397, and 409–429; these read LTQF…ILTL, IFFS…TCLL, VVPV…YGIY, LASV…FLLF, GVAL…VYFL, WLFF…VVGG, IIIA…ITLW, MLVT…LKRY, LVVM…GLII, YKAA…IVLA, and VFFC…YWLF.

Belongs to the WzyE family. Probably part of a complex composed of WzxE, WzyE and WzzE.

It is found in the cell inner membrane. The protein operates within bacterial outer membrane biogenesis; enterobacterial common antigen biosynthesis. Its function is as follows. Probably involved in the polymerization of enterobacterial common antigen (ECA) trisaccharide repeat units. In Photorhabdus laumondii subsp. laumondii (strain DSM 15139 / CIP 105565 / TT01) (Photorhabdus luminescens subsp. laumondii), this protein is Probable ECA polymerase.